The following is a 589-amino-acid chain: TAF5-like RNA polymerase II p300/CBP-associated factor-associated factor 65 kDa subunit 5L (589 aa).

Polar residues predominate over residues 211–221 (ASGSSSRSENN). The disordered stretch occupies residues 211–230 (ASGSSSRSENNGLEPPDMPS). WD repeat units follow at residues 266–305 (NTEQ…LKSE), 340–379 (GHCG…NTVL), 382–421 (GHAY…PLRI), 424–463 (GHLA…SVRL), 466–505 (GHRG…LYKE), and 508–547 (GHTD…CSAP).

It belongs to the WD repeat TAF5 family. In terms of assembly, the PCAF complex is composed of a number of TBP-associated factors (TAFS), such as TAF5, TAF5L, TAF6, TAF6L, TAF9, TAF10 and TAF12, PCAF, and also PCAF-associated factors (PAFs), such as TADA2L/ADA2, TADA3L/ADA3 and SPT3. Component of the STAGA transcription coactivator-HAT complex, at least composed of SUPT3H, GCN5L2, TAF5L, TAF6L, SUPT7L, TADA3L, TAD1L, TAF10, TAF12, TRRAP and TAF9.

The protein resides in the nucleus. In terms of biological role, functions as a component of the PCAF complex. The PCAF complex is capable of efficiently acetylating histones in a nucleosomal context. The PCAF complex could be considered as the human version of the yeast SAGA complex. With TAF6L, acts as an epigenetic regulator essential for somatic reprogramming. Regulates target genes through H3K9ac deposition and MYC recruitment which trigger MYC regulatory network to orchestrate gene expression programs to control embryonic stem cell state. The chain is TAF5-like RNA polymerase II p300/CBP-associated factor-associated factor 65 kDa subunit 5L from Homo sapiens (Human).